Consider the following 161-residue polypeptide: Putative acetyltransferase SAV0762 (161 aa).

This sequence belongs to the transferase hexapeptide repeat family.

In Staphylococcus aureus (strain Mu50 / ATCC 700699), this protein is Putative acetyltransferase SAV0762.